A 1816-amino-acid chain; its full sequence is uncharacterized protein (1816 aa).

2 disordered regions span residues 338–357 (DSSS…NNNN) and 562–605 (ELEK…IKPK). Low complexity predominate over residues 339-357 (SSSSSSNNNNNNNNNNNNN). Over residues 562–577 (ELEKERIKKEKEDSKK) the composition is skewed to basic and acidic residues. The segment covering 581-603 (KQSSSSSSSSTTTTSTTTSSTIK) has biased composition (low complexity). Residues 826 to 999 (LDIVDKRESA…FLKKIDPNRK (174 aa)) form the Helicase ATP-binding domain. Residue 839–846 (ASTSSGKT) participates in ATP binding. Residues 949–952 (DEVH) carry the DEAH box motif. The Helicase C-terminal domain maps to 1198–1379 (QLDLVIERFQ…SVVSPSLCLS (182 aa)). Residues 1388 to 1487 (TNGSANKSNE…TTTKTPTTTS (100 aa)) form a disordered region. The span at 1395-1427 (SNEENKVQVKENEKEREKEKEKEKEKEKEKETI) shows a compositional bias: basic and acidic residues. The span at 1445-1454 (NWDDDEEETA) shows a compositional bias: acidic residues. Over residues 1456 to 1487 (STKTTPATTPTTTTTENTPATTTTTKTPTTTS) the composition is skewed to low complexity.

This sequence belongs to the helicase family. SKI2 subfamily.

The protein resides in the nucleus. This is an uncharacterized protein from Dictyostelium discoideum (Social amoeba).